The sequence spans 138 residues: DNA-directed RNA polymerase subunit omega (138 aa).

It belongs to the RNA polymerase subunit omega family. As to quaternary structure, the RNAP catalytic core consists of 2 alpha, 1 beta, 1 beta' and 1 omega subunit. When a sigma factor is associated with the core the holoenzyme is formed, which can initiate transcription.

The enzyme catalyses RNA(n) + a ribonucleoside 5'-triphosphate = RNA(n+1) + diphosphate. In terms of biological role, promotes RNA polymerase assembly. Latches the N- and C-terminal regions of the beta' subunit thereby facilitating its interaction with the beta and alpha subunits. This is DNA-directed RNA polymerase subunit omega from Thermodesulfovibrio yellowstonii (strain ATCC 51303 / DSM 11347 / YP87).